The following is a 1528-amino-acid chain: MPSTAFILKCLEFTDTGEEVVLVAWNKTENYIAAGGQTGSIRILLLDFNSLSEQGYNISDLRTSTRNVRILMDKKLSLHDNALITSIAWNEKETKLATSDNRGLVFISSTDTGKWVRNLVNDSNRAAVVTTTWSPDASRILMVYVNGLVMLGTASGHRIYNGTINKGSAPKFGLIASNAIEVFILAWGNAICCYNFSGEEVWSVSPLLATNSDNHFVHGCWGHSSESAQLTALSPSRDPACNGSSMPQIKINSFSGDSMTLIAVTSNGMLCVYSVLTGELLSSVSTEIIPVNVQLSPGSHMLCITGSVQSSDSNFGLHQLRGNQGVSGDSTKHTAIVVVYRTADLATISRLRLPERVATSSSWDSTGLRLVLAAGKNIYIATVRPSYNHYLMNDGTMAFTMSNYTSTILSTASFVDDTQRPPMNVGALFSKKTAEEAPSSAISSFEERILDRARCNECVLFWKPGLQAPYQRWPARMIAVVGCKSYIAILTLKTNTSGTRKHHTHICFYTSVCAPIFSIDLPYVPFYTAGSGNYLVCASSSRISVVDIRGLANEAIGLVDAENVSYVYEWHADSYPLAQDRELTVARLTVNNPIVGVACCDVALFVARQDERVQRYSLPSLTLLETMTIKPNQEYMQTNCNGTVLACLHEDGSLVFYYTQSYYSEFLYAHHNPAEQQQQKQQPAPKPPQAQAHLTLLDTDADTAAALGFGQDSVVETESAPYVIKNSVLKNVNVSSGELLQDSAQARSGGVSTIPPYSPELIGIWGLVFSPEDPNLVAVSSQYKVIVFHLDTQTREDSIQTSAHIIGFSGLSIIASYLDEVSHNISSLDHAYYVLETQMLRELQEIIFGQQQAPESFNPLVDAALNRGCLNKNMISLTSDSKSGVPSSLFDSVAPKTIAIKPVRGQQPVGDMVDSGLDVTASNSSQPSTQTSQALYSKDGQISINLAGAVEYVKSHPSVHLYRIVAEASLITLRLEVASYFYIRAGDYVSYNFCESLLRLQSQDQRRAEMLMLIGNFSSAEHVYKQVLGRPDLIVKTQTDLQMWLSIIRAAKLSRTPGGNLLIDDKLLEKAHKSIGLYYMRQQQYAIASDFLQKSGDPYLYAESLFAARRYAELKALAVSLPVDEFANCIAKVAVMLARLGDVEGASEALVRVNDPHSAVHISLQLKRFDIAAAIAGKHNILHIIDRELSVYLKQLLAAGDDQGALELLRKTKQGEVIAAVIINLVLKELQTIFVNRTFPMPPGLFSKLRRIIVLAGKEATYVQREQAKKNLQAHASAAPDCMLTEQATNAAIDTFINEDDNSKAVHDVKAKNTGKEASSLEHELENAQSRLRSVPVIWRIARQTRFIVLSSYMLYIGNPEQALWPAIEAANYYHRTNDSQSSADPCIQYLSRIALPIAAQAALLFGDFELASNLLELIEADTELPASERDQLEQMSVLIYSEYNITSVPSKRKDNYQINCGHCNTLLPPYCGMCEKCHWQTPICVRTGQPIKSDKMDKTVLCQMCRSLATMGKTHLSVCPLCHEPYQ.

4 WD repeats span residues 123–170, 244–285, 619–667, and 759–798; these read SNRA…GSAP, SSMP…SSVS, PSLT…SEFL, and PELIGIWGLVFSPEDPNLVAVSSQYKVIVFHLDTQTREDS. The disordered stretch occupies residues 914–933; the sequence is DSGLDVTASNSSQPSTQTSQ. Residues 920-933 are compositionally biased toward low complexity; the sequence is TASNSSQPSTQTSQ.

Its subcellular location is the cell projection. The protein resides in the cilium. It localises to the flagellum. The protein localises to the cytoplasm. It is found in the cytoskeleton. Its subcellular location is the flagellum axoneme. The protein resides in the flagellum basal body. Functionally, component of the intraflagellar transport complex A (IFT-A) involved in flagellar assembly. The polypeptide is Intraflagellar transport protein 121 (Giardia intestinalis (strain ATCC 50803 / WB clone C6) (Giardia lamblia)).